The following is a 451-amino-acid chain: 2-succinylbenzoate--CoA ligase (451 aa).

Belongs to the ATP-dependent AMP-binding enzyme family. MenE subfamily.

It catalyses the reaction 2-succinylbenzoate + ATP + CoA = 2-succinylbenzoyl-CoA + AMP + diphosphate. It functions in the pathway quinol/quinone metabolism; 1,4-dihydroxy-2-naphthoate biosynthesis; 1,4-dihydroxy-2-naphthoate from chorismate: step 5/7. Its pathway is quinol/quinone metabolism; menaquinone biosynthesis. Converts 2-succinylbenzoate (OSB) to 2-succinylbenzoyl-CoA (OSB-CoA). The protein is 2-succinylbenzoate--CoA ligase of Escherichia coli (strain K12).